A 146-amino-acid chain; its full sequence is MCDIYHWGLIAFIVGILFLCVFMLSCGYFLGGCSSSRSKNVPFESGIKSIGNARIQFSVKFYLIAMFFVIFDVEGIYVYAWAISVRDVGWIGFSEIFIFIFILLVSLIYLIRIGMFDWIEQSSRHVHCVDFFDIDTSRYLKKSNKR.

The next 3 helical transmembrane spans lie at 4–24, 63–83, and 91–111; these read IYHW…VFML, LIAM…AWAI, and IGFS…IYLI.

It belongs to the complex I subunit 3 family. NDH-1 is composed of 13 different subunits. Subunits NuoA, H, J, K, L, M, N constitute the membrane sector of the complex.

It is found in the cell inner membrane. The catalysed reaction is a quinone + NADH + 5 H(+)(in) = a quinol + NAD(+) + 4 H(+)(out). NDH-1 shuttles electrons from NADH, via FMN and iron-sulfur (Fe-S) centers, to quinones in the respiratory chain. The immediate electron acceptor for the enzyme in this species is believed to be ubiquinone. Couples the redox reaction to proton translocation (for every two electrons transferred, four hydrogen ions are translocated across the cytoplasmic membrane), and thus conserves the redox energy in a proton gradient. This is NADH-quinone oxidoreductase subunit A from Blochmanniella pennsylvanica (strain BPEN).